Reading from the N-terminus, the 198-residue chain is Glycerol-3-phosphate acyltransferase (198 aa).

The next 5 membrane-spanning stretches (helical) occupy residues Leu5–Gly25, Ser56–Phe76, Phe84–Phe104, Ala114–Leu134, and Leu158–Trp178.

This sequence belongs to the PlsY family. In terms of assembly, probably interacts with PlsX.

The protein resides in the cell membrane. It carries out the reaction an acyl phosphate + sn-glycerol 3-phosphate = a 1-acyl-sn-glycero-3-phosphate + phosphate. It functions in the pathway lipid metabolism; phospholipid metabolism. Catalyzes the transfer of an acyl group from acyl-phosphate (acyl-PO(4)) to glycerol-3-phosphate (G3P) to form lysophosphatidic acid (LPA). This enzyme utilizes acyl-phosphate as fatty acyl donor, but not acyl-CoA or acyl-ACP. The sequence is that of Glycerol-3-phosphate acyltransferase from Listeria welshimeri serovar 6b (strain ATCC 35897 / DSM 20650 / CCUG 15529 / CIP 8149 / NCTC 11857 / SLCC 5334 / V8).